We begin with the raw amino-acid sequence, 75 residues long: Cytochrome c oxidase subunit 6C (75 aa).

The Mitochondrial matrix portion of the chain corresponds to 1 to 13 (MASSALAKPQMRG). A helical transmembrane segment spans residues 14–54 (LLARRLRIHIVGAFVVSLGVAAFYKYAVAEPRKKAYADFYR). The Mitochondrial intermembrane portion of the chain corresponds to 55 to 75 (NYDSVKYFEEMRKAGVFQSVK).

It belongs to the cytochrome c oxidase subunit 6c family. In terms of assembly, component of the cytochrome c oxidase (complex IV, CIV), a multisubunit enzyme composed of 14 subunits. The complex is composed of a catalytic core of 3 subunits MT-CO1, MT-CO2 and MT-CO3, encoded in the mitochondrial DNA, and 11 supernumerary subunits COX4I, COX5A, COX5B, COX6A, COX6B, COX6C, COX7A, COX7B, COX7C, COX8 and NDUFA4, which are encoded in the nuclear genome. The complex exists as a monomer or a dimer and forms supercomplexes (SCs) in the inner mitochondrial membrane with NADH-ubiquinone oxidoreductase (complex I, CI) and ubiquinol-cytochrome c oxidoreductase (cytochrome b-c1 complex, complex III, CIII), resulting in different assemblies (supercomplex SCI(1)III(2)IV(1) and megacomplex MCI(2)III(2)IV(2)).

It localises to the mitochondrion inner membrane. The protein operates within energy metabolism; oxidative phosphorylation. Functionally, component of the cytochrome c oxidase, the last enzyme in the mitochondrial electron transport chain which drives oxidative phosphorylation. The respiratory chain contains 3 multisubunit complexes succinate dehydrogenase (complex II, CII), ubiquinol-cytochrome c oxidoreductase (cytochrome b-c1 complex, complex III, CIII) and cytochrome c oxidase (complex IV, CIV), that cooperate to transfer electrons derived from NADH and succinate to molecular oxygen, creating an electrochemical gradient over the inner membrane that drives transmembrane transport and the ATP synthase. Cytochrome c oxidase is the component of the respiratory chain that catalyzes the reduction of oxygen to water. Electrons originating from reduced cytochrome c in the intermembrane space (IMS) are transferred via the dinuclear copper A center (CU(A)) of subunit 2 and heme A of subunit 1 to the active site in subunit 1, a binuclear center (BNC) formed by heme A3 and copper B (CU(B)). The BNC reduces molecular oxygen to 2 water molecules using 4 electrons from cytochrome c in the IMS and 4 protons from the mitochondrial matrix. This is Cytochrome c oxidase subunit 6C (COX6C) from Nycticebus coucang (Slow loris).